The following is a 340-amino-acid chain: Mitochondrial amidoxime-reducing component 1 (340 aa).

G2 carries the N-myristoyl glycine lipid modification. Residues 2-24 (GAGSWALTLFGFSAFRVPGQPRS) are Mitochondrial matrix-facing. Residues 25 to 44 (TWLGVAALGLAAVALGTVAW) traverse the membrane as a helical; Signal-anchor for type II membrane protein segment. At 45 to 340 (RRARPRRRRR…VGDPVYLLGQ (296 aa)) the chain is on the cytoplasmic side. Mo-molybdopterin-binding residues include K70, S71, and R95. The MOSC N-terminal region stretch occupies residues 96–186 (FWLVINEEGN…KMQSCRLVHF (91 aa)). The 148-residue stretch at 191 to 338 (RPRSSRQMKA…IRVGDPVYLL (148 aa)) folds into the MOSC domain. Mo-molybdopterin contacts are provided by S214, R241, N243, T274, R275, C276, and Y320.

In terms of assembly, component of a complex composed of cytochrome b5, NADH-cytochrome b5 reductase and MTARC1. Requires Mo-molybdopterin as cofactor.

Its subcellular location is the mitochondrion outer membrane. The protein resides in the membrane. The enzyme catalyses N(omega)-hydroxy-L-arginine + 2 Fe(II)-[cytochrome b5] + 2 H(+) = L-arginine + 2 Fe(III)-[cytochrome b5] + H2O. Functionally, catalyzes the reduction of N-oxygenated molecules, acting as a counterpart of cytochrome P450 and flavin-containing monooxygenases in metabolic cycles. As a component of prodrug-converting system, reduces a multitude of N-hydroxylated prodrugs particularly amidoximes, leading to increased drug bioavailability. May be involved in mitochondrial N(omega)-hydroxy-L-arginine (NOHA) reduction, regulating endogenous nitric oxide levels and biosynthesis. Postulated to cleave the N-OH bond of N-hydroxylated substrates in concert with electron transfer from NADH to cytochrome b5 reductase then to cytochrome b5, the ultimate electron donor that primes the active site for substrate reduction. This is Mitochondrial amidoxime-reducing component 1 (Mtarc1) from Mus musculus (Mouse).